A 358-amino-acid polypeptide reads, in one-letter code: Magnesium-protoporphyrin IX monomethyl ester [oxidative] cyclase 2 (358 aa).

It belongs to the AcsF family. Fe cation is required as a cofactor.

The catalysed reaction is Mg-protoporphyrin IX 13-monomethyl ester + 3 NADPH + 3 O2 + 2 H(+) = 3,8-divinyl protochlorophyllide a + 3 NADP(+) + 5 H2O. Its pathway is porphyrin-containing compound metabolism; chlorophyll biosynthesis (light-independent). In terms of biological role, catalyzes the formation of the isocyclic ring in chlorophyll biosynthesis. Mediates the cyclase reaction, which results in the formation of divinylprotochlorophyllide (Pchlide) characteristic of all chlorophylls from magnesium-protoporphyrin IX 13-monomethyl ester (MgPMME). This chain is Magnesium-protoporphyrin IX monomethyl ester [oxidative] cyclase 2, found in Nostoc sp. (strain PCC 7120 / SAG 25.82 / UTEX 2576).